We begin with the raw amino-acid sequence, 329 residues long: MPILFDCNAIASQVLKDEASALLESVGQFQKPNDLEAIVKLILKSQENGGKLVIVGVGKSALVAQKIVASMLSTGNRSAFLHPTEAMHGDLGMVEKNDVVLMISYGGESLELLNLVSHLKRLSHKIITFTKSPNSSLSKLGDYYLSLKIQKEACPINTAPTTSTTLTLALGDVLMACLMRAKNFSQEDFASFHPGGLLGKKLFVKVKDLLQTTNLPLIAPSTSFKDALIEMSEKRLGSAILVNEANELVGVLSDGDVRRALLKGVSLKSEVRHFATLKPKSFKNLDALLLEALEFLERHKIQLLVCVDDHNKVLGVLHLHQLLELGLKA.

Positions 38 to 184 constitute an SIS domain; it reads IVKLILKSQE…MACLMRAKNF (147 aa). Position 56–61 (56–61) interacts with ATP; that stretch reads GVGKSA. 2 CBS domains span residues 211–267 and 270–329; these read QTTN…GVSL and EVRH…GLKA.

Belongs to the SIS family. GutQ/KpsF subfamily.

This is an uncharacterized protein from Helicobacter pylori (strain ATCC 700392 / 26695) (Campylobacter pylori).